Consider the following 226-residue polypeptide: Nucleoside triphosphate pyrophosphatase (226 aa).

Catalysis depends on Asp-79, which acts as the Proton acceptor. The disordered stretch occupies residues 204–226 (WSRGTSTHPTPGTSATPKPNPGA). Positions 206–220 (RGTSTHPTPGTSATP) are enriched in polar residues.

This sequence belongs to the Maf family. A divalent metal cation serves as cofactor.

It is found in the cytoplasm. It catalyses the reaction a ribonucleoside 5'-triphosphate + H2O = a ribonucleoside 5'-phosphate + diphosphate + H(+). The enzyme catalyses a 2'-deoxyribonucleoside 5'-triphosphate + H2O = a 2'-deoxyribonucleoside 5'-phosphate + diphosphate + H(+). In terms of biological role, nucleoside triphosphate pyrophosphatase. May have a dual role in cell division arrest and in preventing the incorporation of modified nucleotides into cellular nucleic acids. This chain is Nucleoside triphosphate pyrophosphatase, found in Salinispora tropica (strain ATCC BAA-916 / DSM 44818 / JCM 13857 / NBRC 105044 / CNB-440).